The chain runs to 407 residues: Aurora kinase A-A (407 aa).

A compositionally biased stretch (basic and acidic residues) spans 1-10 (MERAVKENHK). A disordered region spans residues 1–130 (MERAVKENHK…KTSAVPKEEG (130 aa)). 2 stretches are compositionally biased toward polar residues: residues 67 to 77 (ILSSQKPTTQI) and 84 to 110 (QGHQSSKPQGPNENRNPQQTSHSSTPN). A Protein kinase domain is found at 140–390 (FEIGRPLGKG…LKGVLEHPWI (251 aa)). ATP-binding positions include K150, K169, and 217–220 (LDYA). D263 acts as the Proton acceptor in catalysis. D281 lines the ATP pocket. Residues 287-300 (HAPSSRRTTLCGTL) are activation segment.

Belongs to the protein kinase superfamily. Ser/Thr protein kinase family. Aurora subfamily. As to quaternary structure, interacts with kif2c and kif11. Phosphorylated. Autophosphorylated on a serine residue. As to expression, highly expressed in ovary and testis.

It localises to the cytoplasm. The protein resides in the cytoskeleton. The protein localises to the spindle. Its subcellular location is the microtubule organizing center. It is found in the centrosome. The catalysed reaction is L-seryl-[protein] + ATP = O-phospho-L-seryl-[protein] + ADP + H(+). It carries out the reaction L-threonyl-[protein] + ATP = O-phospho-L-threonyl-[protein] + ADP + H(+). Its function is as follows. Mitotic serine/threonine kinases that contributes to the regulation of cell cycle progression. Associates with the centrosome and the spindle microtubules during mitosis and plays a critical role in various mitotic events including the establishment of mitotic spindle, centrosome duplication, centrosome separation as well as maturation, chromosomal alignment, spindle assembly checkpoint, and cytokinesis. Phosphorylates numerous target proteins. Important for microtubule formation and/or stabilization. This Xenopus laevis (African clawed frog) protein is Aurora kinase A-A (aurka-a).